A 489-amino-acid chain; its full sequence is Beta-dihydromenaquinone-9 omega-hydroxylase (489 aa).

Residue C435 coordinates heme.

This sequence belongs to the cytochrome P450 family. Heme is required as a cofactor.

It is found in the cytoplasm. It catalyses the reaction beta-dihydromenaquinone-9 + 2 reduced [2Fe-2S]-[ferredoxin] + O2 + 2 H(+) = omega-hydroxy-beta-dihydromenaquinone-9 + 2 oxidized [2Fe-2S]-[ferredoxin] + H2O. Functionally, involved in the biosynthesis of sulfomenaquinone (SMK, initially named S881 on the basis of its mass), which is localized in the outer envelope of M.bovis and negatively regulates its virulence. Catalyzes the hydroxylation of beta-dihydromenaquinone-9, leading to the formation of omega-hydroxy-beta-dihydromenaquinone-9. The polypeptide is Beta-dihydromenaquinone-9 omega-hydroxylase (cyp128) (Mycobacterium bovis (strain ATCC BAA-935 / AF2122/97)).